The chain runs to 418 residues: MDIKDYVINIAKNSKLAAKKLSYADTNTKNKALIEMSKALLENKDYILSQNKIDIENAEKIGTSKALIDRLTLNDKRITDMAEALIKTSSLQDPIGEVIKMWKTPDELQIGQMRVPLGVIGIIYEARPNVTVDAAALCIKSGNSVILRGGKEAINSNTAIAKIIKNAVVTAGLPDGSIEFIDITDRETVNVMMRLNGLIDVLIPRGGAGLIKSVVENSSVPVIETGTGNCHVYVDKYADFDKAERIIINAKLQRPAVCNAMESLLVHKDVAHEFLPRISSKLKELKVQIRGCAATQKIVKDIVPATDEDFGKEFLDLILSVKVVDSLEEAIDHIFKYSTKHSEAIITENYTNAQRFLKEVDAAAVYVNASTRFTDGEQFGFGGEIGISTQKLHARGPMGLEQLTTTKYVIYGDGQIRK.

Belongs to the gamma-glutamyl phosphate reductase family.

The protein resides in the cytoplasm. It carries out the reaction L-glutamate 5-semialdehyde + phosphate + NADP(+) = L-glutamyl 5-phosphate + NADPH + H(+). Its pathway is amino-acid biosynthesis; L-proline biosynthesis; L-glutamate 5-semialdehyde from L-glutamate: step 2/2. In terms of biological role, catalyzes the NADPH-dependent reduction of L-glutamate 5-phosphate into L-glutamate 5-semialdehyde and phosphate. The product spontaneously undergoes cyclization to form 1-pyrroline-5-carboxylate. In Clostridium acetobutylicum (strain ATCC 824 / DSM 792 / JCM 1419 / IAM 19013 / LMG 5710 / NBRC 13948 / NRRL B-527 / VKM B-1787 / 2291 / W), this protein is Gamma-glutamyl phosphate reductase.